The chain runs to 628 residues: E3 SUMO-protein ligase PIAS3 (628 aa).

The interaction with CCAR2 stretch occupies residues 1–200 (MAELGELKHM…QLRFCLCETS (200 aa)). The SAP domain maps to 11 to 45 (VMSFRVSELQVLLGFAGRNKSGRKHELLAKALHLL). Positions 19–23 (LQVLL) match the LXXLL motif motif. Glycyl lysine isopeptide (Lys-Gly) (interchain with G-Cter in SUMO2) cross-links involve residues Lys46 and Lys56. Residues 72 to 95 (PSDLSLLSLPPGTSPVGSPSPLAS) form a disordered region. The PINIT domain occupies 115–280 (MHPPLPQPVH…SLSVYLVRQL (166 aa)). Residues Lys230 and Lys307 each participate in a glycyl lysine isopeptide (Lys-Gly) (interchain with G-Cter in SUMO2) cross-link. The SP-RING-type zinc-finger motif lies at 312-393 (PDSEVATTSL…FMEILNSCSD (82 aa)). Zn(2+) is bound by residues Cys343, His345, Cys366, and Cys369. An SUMO1-binding region spans residues 450-460 (LTIESSSDEED). Glycyl lysine isopeptide (Lys-Gly) (interchain with G-Cter in SUMO2) cross-links involve residues Lys466 and Lys482. The interval 573-618 (LAPTLGSSHRSATPAPAPGRVSSIVAPGSSLREGHGGPLPSGPSLT) is disordered.

Belongs to the PIAS family. As to quaternary structure, binds SUMO1 and UBE2I. Interacts with AR, BCL11A, GFI1, HMGA2, IRF1, MITF, NCOA2, as well as with STAT3, after treatment with IL6, CNTF or OSM and with STAT5, after PRL stimulation. Interacts with PLAG1. Interacts with ZFHX3. Interacts with MTA1. Interacts with CCAR2 (via N-terminus). Interacts with TRIM8. Interacts with PRDM1. Sumoylated. Widely expressed, with highest levels in lung, kidney and spleen.

The protein localises to the cytoplasm. It localises to the nucleus. It is found in the nucleus speckle. The protein operates within protein modification; protein sumoylation. Its function is as follows. Functions as an E3-type small ubiquitin-like modifier (SUMO) ligase, stabilizing the interaction between UBE2I and the substrate, and as a SUMO-tethering factor. Plays a crucial role as a transcriptional coregulation in various cellular pathways, including the STAT pathway and the steroid hormone signaling pathway. The effects of this transcriptional coregulation, transactivation or silencing, may vary depending upon the biological context. Enhances the sumoylation of MTA1 and may participate in its paralog-selective sumoylation. Sumoylates CCAR2 which promotes its interaction with SIRT1. Diminishes the sumoylation of ZFHX3 by preventing the colocalization of ZFHX3 with SUMO1 in the nucleus. In Rattus norvegicus (Rat), this protein is E3 SUMO-protein ligase PIAS3 (Pias3).